We begin with the raw amino-acid sequence, 1138 residues long: Protein RECOGNITION OF PERONOSPORA PARASITICA 7 (1138 aa).

Residues 166-422 form the NB-ARC domain; sequence EENVKKLVGY…CNYVLSLSFE (257 aa). 189–196 provides a ligand contact to ATP; that stretch reads GMGGLGKT. LRR repeat units lie at residues 544 to 565, 566 to 581, 582 to 606, 607 to 631, 655 to 680, 681 to 705, 707 to 726, 727 to 752, 754 to 774, 775 to 797, 798 to 825, 847 to 871, 873 to 893, 894 to 918, 940 to 963, 1028 to 1050, 1055 to 1078, 1079 to 1103, and 1115 to 1138; these read QYPT…SLVV, VTLG…FTRL, ELLR…IGKL, IHLR…NLKL, MQEL…NLVK, LETL…RLRT, TIEL…IGGL, KYLE…VFDF, HLKR…QHFP, SHLT…ILEK, LLQL…GFPQ, MPLL…HLPS, LTAI…LERL, VHLK…GFPQ, MPRL…GFPQ, LEKL…RMVC, FPQL…QGSM, PLLH…RFIY, and KKRL…EFDD.

This sequence belongs to the disease resistance NB-LRR family.

In terms of biological role, disease resistance protein required for incompatible interactions with avirulent strains of Hyaloperonospora arabidopsidis (downy mildew), isolate Hpa-Hiks1 in cv. Columbia. The polypeptide is Protein RECOGNITION OF PERONOSPORA PARASITICA 7 (Arabidopsis thaliana (Mouse-ear cress)).